A 104-amino-acid chain; its full sequence is Pole-localizer protein TmaR (104 aa).

Coiled coils occupy residues R13–D43 and S76–E96.

The protein belongs to the pole-localizer TmaR family.

It localises to the cytoplasm. Pole-localizer protein involved in the regulation of several cellular processes. In Vibrio vulnificus (strain CMCP6), this protein is Pole-localizer protein TmaR.